Reading from the N-terminus, the 245-residue chain is Uridylate kinase (245 aa).

18–21 (KLSG) contacts ATP. Gly-60 is a UMP binding site. The ATP site is built by Gly-61 and Arg-65. UMP contacts are provided by residues Asp-80 and 141–148 (TGNPFFTT). ATP contacts are provided by Thr-168, Tyr-174, and Asp-177.

It belongs to the UMP kinase family. Homohexamer.

It localises to the cytoplasm. It catalyses the reaction UMP + ATP = UDP + ADP. The protein operates within pyrimidine metabolism; CTP biosynthesis via de novo pathway; UDP from UMP (UMPK route): step 1/1. Inhibited by UTP. Catalyzes the reversible phosphorylation of UMP to UDP. This Pseudomonas aeruginosa (strain UCBPP-PA14) protein is Uridylate kinase.